The following is a 205-amino-acid chain: Ras-related protein Rab-1A (205 aa).

GTP is bound by residues 18 to 26 (GDSGVGKSC), 36 to 43 (YTESYIST), 66 to 70 (DTAGQ), 124 to 127 (NKSD), and 154 to 156 (SAK). The short motif at 40–48 (YISTIGVDF) is the Effector region element. Over residues 183–198 (SDSKPSVKINSSTPVS) the composition is skewed to polar residues. A disordered region spans residues 183–205 (SDSKPSVKINSSTPVSANKGGCC). Residues C204 and C205 are each lipidated (S-geranylgeranyl cysteine).

Belongs to the small GTPase superfamily. Rab family.

Its subcellular location is the golgi apparatus. It localises to the endoplasmic reticulum. Functionally, probably required for transit of protein from the ER through Golgi compartment. This Lymnaea stagnalis (Great pond snail) protein is Ras-related protein Rab-1A (RAB1A).